The chain runs to 132 residues: Small ribosomal subunit protein uS8 (132 aa).

The protein belongs to the universal ribosomal protein uS8 family. Part of the 30S ribosomal subunit. Contacts proteins S5 and S12.

One of the primary rRNA binding proteins, it binds directly to 16S rRNA central domain where it helps coordinate assembly of the platform of the 30S subunit. The protein is Small ribosomal subunit protein uS8 of Pseudarthrobacter chlorophenolicus (strain ATCC 700700 / DSM 12829 / CIP 107037 / JCM 12360 / KCTC 9906 / NCIMB 13794 / A6) (Arthrobacter chlorophenolicus).